The primary structure comprises 289 residues: Secretory carrier-associated membrane protein (289 aa).

Residues 1-65 form a disordered region; that stretch reads MAGRYDPNPF…TSTDGKKKER (65 aa). The Cytoplasmic segment spans residues 1–123; that stretch reads MAGRYDPNPF…EIPIHLRTLQ (123 aa). Over residues 16–31 the composition is skewed to polar residues; the sequence is NPFSNPRSAASATNSR. Positions 59-98 form a coiled coil; it reads DGKKKERDLQAKEAELRKREQEVRRKEEAIARAGIVIEEK. A run of 4 helical transmembrane segments spans residues 124 to 144, 156 to 176, 191 to 211, and 239 to 259; these read YVAF…VVSV, IWFL…ALWY, FGWF…AAVA, and IFYF…IWVI. Over 260 to 289 the chain is Cytoplasmic; it reads QQVYMHFRGGGKTAEMKREAALGAMGAALR.

The protein belongs to the SCAMP family.

Its subcellular location is the cell membrane. It is found in the cytoplasmic vesicle. It localises to the secretory vesicle membrane. In terms of biological role, probably involved in membrane trafficking. This Pisum sativum (Garden pea) protein is Secretory carrier-associated membrane protein (PSAM2).